The chain runs to 294 residues: N-acetylmuramic acid 6-phosphate etherase (294 aa).

In terms of domain architecture, SIS spans 54–217 (VIQSFEEEGR…STASMIGVGK (164 aa)). Residue E82 is the Proton donor of the active site. E113 is an active-site residue.

Belongs to the GCKR-like family. MurNAc-6-P etherase subfamily. In terms of assembly, homodimer.

The catalysed reaction is N-acetyl-D-muramate 6-phosphate + H2O = N-acetyl-D-glucosamine 6-phosphate + (R)-lactate. It participates in amino-sugar metabolism; N-acetylmuramate degradation. Functionally, specifically catalyzes the cleavage of the D-lactyl ether substituent of MurNAc 6-phosphate, producing GlcNAc 6-phosphate and D-lactate. This is N-acetylmuramic acid 6-phosphate etherase from Bacillus cereus (strain 03BB102).